We begin with the raw amino-acid sequence, 116 residues long: Small ribosomal subunit protein bS16 (116 aa).

It belongs to the bacterial ribosomal protein bS16 family.

This Chlamydia trachomatis serovar A (strain ATCC VR-571B / DSM 19440 / HAR-13) protein is Small ribosomal subunit protein bS16.